The following is a 392-amino-acid chain: Probable inactive serine/threonine-protein kinase DDB_G0280855 (392 aa).

The region spanning 46–349 is the Protein kinase domain; that stretch reads ITKKTIYACD…IERIIQHPYF (304 aa). Residues 52–60 and Lys-75 each bind ATP; that span reads YACDINGTM.

It belongs to the protein kinase superfamily. CMGC Ser/Thr protein kinase family. MAP kinase subfamily.

The chain is Probable inactive serine/threonine-protein kinase DDB_G0280855 from Dictyostelium discoideum (Social amoeba).